The chain runs to 331 residues: Vitamin B12 import system permease protein BtuC (331 aa).

9 consecutive transmembrane segments (helical) span residues 18–38 (WLFG…CAGE), 64–84 (LAVL…QALF), 91–111 (PGLL…VLLG), 114–134 (VLPG…ITFI), 149–169 (LLAG…AVYF), 194–214 (LWLM…SQPL), 243–263 (GWMV…GLVI), 277–297 (VLLP…DIIA), and 305–325 (ELPI…WLLL).

It belongs to the binding-protein-dependent transport system permease family. FecCD subfamily. The complex is composed of two ATP-binding proteins (BtuD), two transmembrane proteins (BtuC) and a solute-binding protein (BtuF).

The protein localises to the cell inner membrane. Functionally, part of the ABC transporter complex BtuCDF involved in vitamin B12 import. Involved in the translocation of the substrate across the membrane. This chain is Vitamin B12 import system permease protein BtuC, found in Klebsiella pneumoniae subsp. pneumoniae (strain ATCC 700721 / MGH 78578).